Consider the following 564-residue polypeptide: Efflux pump hmp6 (564 aa).

Residues 1-25 show a composition bias toward basic and acidic residues; it reads MEKHAEPEKSLGDKEFQEKELHEKP. Residues 1-46 form a disordered region; that stretch reads MEKHAEPEKSLGDKEFQEKELHEKPAPAASEDISGDSSVNKEDGPD. 8 helical membrane-spanning segments follow: residues 58 to 78, 96 to 118, 125 to 145, 156 to 176, 186 to 206, 214 to 234, 259 to 279, and 289 to 309; these read LAVV…DTTI, VGWY…GKLY, IVFT…GVAP, IAGL…IHSV, GMIV…GGAF, WCFY…LFFF, FGTF…QMGG, and IIVL…VQFF. 2 N-linked (GlcNAc...) asparagine glycosylation sites follow: Asn-312 and Asn-322. The next 4 membrane-spanning stretches (helical) occupy residues 330 to 350, 361 to 383, 395 to 415, and 452 to 472; these read IYMF…PIWF, SGIR…GALV, ASVV…VDAS, and IGTA…VSAA.

It belongs to the major facilitator superfamily. TCR/Tet family.

The protein localises to the cell membrane. In terms of biological role, efflux pump that might be required for efficient secretion of hypothemycin or other secondary metabolies produced by the hypothemycin gene cluster. This is Efflux pump hmp6 from Hypomyces subiculosus (Nectria subiculosa).